Consider the following 1205-residue polypeptide: Nitric oxide synthase 3 (1205 aa).

Disordered stretches follow at residues 1-20 and 26-73; these read MGNLKSVGQEPGPPCGLGLG and CGKQ…FPRV. The span at 33 to 47 shows a compositional bias: pro residues; sequence SPAPEPSWAPAPATP. Cys-96 and Cys-101 together coordinate Zn(2+). The tract at residues 100 to 489 is interaction with NOSIP; it reads RCLGSLVLPR…PDPWKGSAAK (390 aa). Residue Ser-104 coordinates (6R)-L-erythro-5,6,7,8-tetrahydrobiopterin. At Ser-116 the chain carries Phosphoserine. Cys-186 contacts heme b. L-arginine is bound by residues Gln-250, Trp-359, Tyr-360, and Glu-364. Position 368 (Arg-368) interacts with (6R)-L-erythro-5,6,7,8-tetrahydrobiopterin. An L-arginine-binding site is contributed by Asn-369. Ala-449, Trp-450, and Phe-463 together coordinate (6R)-L-erythro-5,6,7,8-tetrahydrobiopterin. Tyr-478 provides a ligand contact to heme b. A Phosphothreonine modification is found at Thr-498. Residues Ser-529, Glu-530, Thr-531, Arg-533, Ser-575, and Thr-576 each coordinate FMN. Phosphoserine is present on residues Ser-618, Ser-636, and Ser-641. 4 residues coordinate FMN: Ser-657, Cys-664, Glu-690, and Gln-694. Arg-781 lines the NADP(+) pocket. The interval 796–850 is disordered; that stretch reads LQYQPGDHISPHPPPRSSHRPGQGGPRVAPFSERPLMPRTPPPGGPPPSWVRDPR. His-803 lines the FAD pocket. Residues 833-844 are compositionally biased toward pro residues; it reads PRTPPPGGPPPS. 5 residues coordinate FAD: Arg-939, Tyr-941, Ser-942, Thr-957, and Ala-959. Positions 1018, 1051, 1080, 1081, 1087, 1089, and 1091 each coordinate NADP(+). Thr-1177 is modified (phosphothreonine). Residues Ser-1179 and Ser-1181 each carry the phosphoserine modification.

The protein belongs to the NOS family. In terms of assembly, homodimer. Interacts with NOSIP and NOSTRIN. Interacts with HSP90AB1. Forms a complex with ASL, ASS1 and SLC7A1; the complex regulates cell-autonomous L-arginine synthesis and citrulline recycling while channeling extracellular L-arginine to nitric oxide synthesis pathway. The cofactor is heme b. It depends on FAD as a cofactor. FMN serves as cofactor. Requires (6R)-L-erythro-5,6,7,8-tetrahydrobiopterin as cofactor.

The protein localises to the membrane. Its subcellular location is the caveola. It is found in the cytoplasm. It localises to the cytoskeleton. The protein resides in the golgi apparatus. The protein localises to the cell membrane. The catalysed reaction is 2 L-arginine + 3 NADPH + 4 O2 + H(+) = 2 L-citrulline + 2 nitric oxide + 3 NADP(+) + 4 H2O. Its activity is regulated as follows. Stimulated by calcium/calmodulin. Inhibited by NOSIP and NOSTRIN. Produces nitric oxide (NO) which is implicated in vascular smooth muscle relaxation through a cGMP-mediated signal transduction pathway. NO mediates vascular endothelial growth factor (VEGF)-induced angiogenesis in coronary vessels and promotes blood clotting through the activation of platelets. In Ovis aries (Sheep), this protein is Nitric oxide synthase 3 (NOS3).